A 499-amino-acid chain; its full sequence is Phenylalanine--tRNA ligase alpha subunit (499 aa).

Residues threonine 330, 372 to 374, and tyrosine 412 contribute to the L-phenylalanine site; that span reads QVE. Mg(2+) is bound at residue glutamate 414. Phenylalanine 438 is an L-phenylalanine binding site.

This sequence belongs to the class-II aminoacyl-tRNA synthetase family. Phe-tRNA synthetase alpha subunit type 2 subfamily. Tetramer of two alpha and two beta subunits. It depends on Mg(2+) as a cofactor.

Its subcellular location is the cytoplasm. The catalysed reaction is tRNA(Phe) + L-phenylalanine + ATP = L-phenylalanyl-tRNA(Phe) + AMP + diphosphate + H(+). This chain is Phenylalanine--tRNA ligase alpha subunit (frs2), found in Schizosaccharomyces pombe (strain 972 / ATCC 24843) (Fission yeast).